The primary structure comprises 80 residues: Acyl carrier protein (80 aa).

In terms of domain architecture, Carrier spans Glu4 to Ala79. The residue at position 39 (Ser39) is an O-(pantetheine 4'-phosphoryl)serine.

This sequence belongs to the acyl carrier protein (ACP) family. 4'-phosphopantetheine is transferred from CoA to a specific serine of apo-ACP by AcpS. This modification is essential for activity because fatty acids are bound in thioester linkage to the sulfhydryl of the prosthetic group.

Its subcellular location is the cytoplasm. Its pathway is lipid metabolism; fatty acid biosynthesis. Its function is as follows. Carrier of the growing fatty acid chain in fatty acid biosynthesis. In Synechococcus elongatus (strain ATCC 33912 / PCC 7942 / FACHB-805) (Anacystis nidulans R2), this protein is Acyl carrier protein.